The sequence spans 583 residues: MESSSVASASSEAGSSRSLEIEELERFIDSYVLEYQVQGLLTDKTEGDGESDKTQSNVSQWTVECTERLEENRTSPRNREPTYSQNGNKEGPLDMLGTDIWAASTVESISGATWDLQPEKLDFTQLQLRQRNSPKHPPPQIDRDGFGKGKRVEGDDINLNDIEKVLPTWQGYSPLPHEADIAQTKKLFRRKRNDRRKQQKPQGGNKQPPSQQNDHQPATAKHNSREHQRQYHGNPPPPHPSGKQGHHGYSQNRRWHHNQKHLPNDLQRNAKETDTLKIEDASVCTVHIPLDIHSNTDSTERHCPPANDSEAKRKESIQSRDRPKISLLQSSKDRLRRRLKEKEDVAVESTNPQKTKMDKLIEILNSMRNNSSDVDYKLTTFMAEAQNSANSEEMLGEIVKTIYQKAVTDRSFAHTAAKLCDRMALFMVEGTKFRSLLLNMLQKDFSIREEMHRSDVERWLGFITFLCEVFGTMRSNMAEPFRVLVCPIYTCLRELLQSEDVKEDAVLCCSMELQSAGRLLEDQLPEMMSELLATARDKMLCPSESMLTRSLLLEVIELHANSWNPLTPTITQYYNKTIQKLTG.

Disordered stretches follow at residues 42 to 95 (TDKT…PLDM), 129 to 154 (RQRNSPKHPPPQIDRDGFGKGKRVEG), 190 to 251 (RKRN…GYSQ), and 294 to 325 (SNTDSTERHCPPANDSEAKRKESIQSRDRPKI). Residues 43-53 (DKTEGDGESDK) show a composition bias toward basic and acidic residues. The segment covering 54–63 (TQSNVSQWTV) has biased composition (polar residues). Composition is skewed to basic and acidic residues over residues 65–80 (CTERLEENRTSPRNRE) and 141–154 (IDRDGFGKGKRVEG). Residues 190–199 (RKRNDRRKQQ) are compositionally biased toward basic residues. Over residues 200–213 (KPQGGNKQPPSQQN) the composition is skewed to low complexity. Residues 298–324 (STERHCPPANDSEAKRKESIQSRDRPK) are compositionally biased toward basic and acidic residues. Residues 361–562 (IEILNSMRNN…LEVIELHANS (202 aa)) form the MIF4G domain.

Belongs to the CTIF family.

It localises to the cytoplasm. It is found in the perinuclear region. Functionally, specifically required for the pioneer round of mRNA translation mediated by the cap-binding complex (CBC), that takes place during or right after mRNA export via the nuclear pore complex (NPC). In contrast, it is not involved in steady state translation, that takes place when the CBC complex is replaced by cytoplasmic cap-binding protein eIF4E. Also required for nonsense-mediated mRNA decay (NMD), the pioneer round of mRNA translation mediated by the cap-binding complex playing a central role in nonsense-mediated mRNA decay (NMD). The chain is CBP80/20-dependent translation initiation factor (ctif) from Xenopus tropicalis (Western clawed frog).